The sequence spans 299 residues: Protein-methionine-sulfoxide reductase catalytic subunit MsrP (299 aa).

Residues 1–44 (MAHRWINDLTPADITPRGAWMNRRQVMAGMAGAGLAAFAGSAQA) constitute a signal peptide (tat-type signal). Mo-molybdopterin contacts are provided by residues asparagine 59, 62-63 (YE), cysteine 117, threonine 152, asparagine 200, arginine 205, and 216-218 (SIK).

This sequence belongs to the MsrP family. As to quaternary structure, heterodimer of a catalytic subunit (MsrP) and a heme-binding subunit (MsrQ). Requires Mo-molybdopterin as cofactor. Predicted to be exported by the Tat system. The position of the signal peptide cleavage has not been experimentally proven.

The protein localises to the periplasm. It catalyses the reaction L-methionyl-[protein] + a quinone + H2O = L-methionyl-(S)-S-oxide-[protein] + a quinol. The enzyme catalyses L-methionyl-[protein] + a quinone + H2O = L-methionyl-(R)-S-oxide-[protein] + a quinol. Part of the MsrPQ system that repairs oxidized periplasmic proteins containing methionine sulfoxide residues (Met-O), using respiratory chain electrons. Thus protects these proteins from oxidative-stress damage caused by reactive species of oxygen and chlorine generated by the host defense mechanisms. MsrPQ is essential for the maintenance of envelope integrity under bleach stress, rescuing a wide series of structurally unrelated periplasmic proteins from methionine oxidation. The catalytic subunit MsrP is non-stereospecific, being able to reduce both (R-) and (S-) diastereoisomers of methionine sulfoxide. The sequence is that of Protein-methionine-sulfoxide reductase catalytic subunit MsrP from Ruegeria pomeroyi (strain ATCC 700808 / DSM 15171 / DSS-3) (Silicibacter pomeroyi).